The following is an 837-amino-acid chain: Toll-like receptor 4 (837 aa).

The N-terminal stretch at 1–23 is a signal peptide; sequence MMSASRLAGTLIPAMAFLSCVRP. Residues 24-629 lie on the Extracellular side of the membrane; that stretch reads ESWEPCVVPN…SLNITCQMNK (606 aa). Cysteine 29 and cysteine 38 are disulfide-bonded. N-linked (GlcNAc...) asparagine glycosylation occurs at asparagine 33. LRR repeat units lie at residues 53–74, 77–98, 101–122, 125–146, and 149–170; these read STKNLDLSFNPLRHLGSYSFFS, ELQVLDLSRCEIQTIEDGAYQS, HLSTLILTGNPIQSLALGAFSG, SLQKLVAVETNLASLENFPIGH, and TLKELNVAHNLIQSFKLPEYFS. The N-linked (GlcNAc...) asparagine glycan is linked to asparagine 171. 3 LRR repeats span residues 174 to 197, 203 to 223, and 225 to 245; these read NLEYLDLSSNKIQSIYCTDLRVLH, NLSLDLSLNPMTFIQPGAFKE, and RLHKLTLRNNFDSLNVMKTCI. The N-linked (GlcNAc...) asparagine glycan is linked to asparagine 203. Cysteine 279 and cysteine 304 form a disulfide bridge. Asparagine 280 and asparagine 307 each carry an N-linked (GlcNAc...) asparagine glycan. LRR repeat units follow at residues 329–349, 350–371, 372–392, 398–420, 421–442, 446–454, 470–493, 495–516, 519–540, and 543–563; these read GWQHLELVNCKFGQFPTLKLK, SLKRLTFTSNKGGNAFSEVDLP, SLEFLDLSRNGLSFKGCCSQS, SLKYLDLSFNGVITMSSNFLGLE, QLEHLDFQHSNLKQMSEFSVFL, NLIYLDISH, SLEVLKMAGNSFQENFLPDIFTEL, NLTFLDLSQCQLEQLSPTAFNS, SLQVLNMSHNNFFSLDTFPYKC, and SLRVLDYSLNHIMTSKKQELQ. A disulfide bridge connects residues cysteine 388 and cysteine 389. Residues asparagine 495 and asparagine 524 are each glycosylated (N-linked (GlcNAc...) asparagine). The N-linked (GlcNAc...) asparagine glycan is linked to asparagine 573. The 51-residue stretch at 577 to 627 folds into the LRRCT domain; the sequence is NDFACTCEHQSFLQWIKDQRQLLVEVERMECATPSDKQGMPVLSLNITCQM. Cystine bridges form between cysteine 581/cysteine 607 and cysteine 583/cysteine 625. Residues asparagine 622 and asparagine 628 are each glycosylated (N-linked (GlcNAc...) asparagine). A helical membrane pass occupies residues 630–650; it reads TIIGVSVLSVLVVSVVAVLVY. Over 651 to 837 the chain is Cytoplasmic; it reads KFYFHLMLLA…GCNWQEATSI (187 aa). Residues 670–813 enclose the TIR domain; the sequence is NVYDAFVIYS…IFWRRLRKAL (144 aa).

It belongs to the Toll-like receptor family. As to quaternary structure, belongs to the lipopolysaccharide (LPS) receptor, a multi-protein complex containing at least CD14, LY96 and TLR4. Binding to bacterial LPS leads to homodimerization. Interacts with LY96 via the extracellular domain. Interacts with MYD88 and TIRAP via their respective TIR domains. Interacts with TICAM2. Interacts with NOX4. Interacts with CNPY3 and HSP90B1; this interaction is required for proper folding in the endoplasmic reticulum. Interacts with MAP3K21; this interaction leads to negative regulation of TLR4 signaling. Interacts with CD36, following CD36 stimulation by oxLDL or amyloid-beta 42, and forms a heterodimer with TLR6. The trimeric complex is internalized and triggers inflammatory response. LYN kinase activity facilitates TLR4-TLR6 heterodimerization and signal initiation. Interacts with TICAM1 in response to LPS in a WDFY1-dependent manner. Interacts with WDFY1 in response to LPS. Interacts with SMPDL3B. Interacts with CEACAM1; upon lipopolysaccharide stimulation, forms a complex including TLR4 and the phosphorylated form of SYK and CEACAM1, which in turn, recruits PTPN6 that dephosphorylates SYK, reducing the production of reactive oxygen species (ROS) and lysosome disruption, which in turn, reduces the activity of the inflammasome. Interacts with RFTN1; the interaction occurs in response to lipopolysaccharide stimulation. Interacts with SCIMP; the interaction occurs in response to lipopolysaccharide stimulation and is enhanced by phosphorylation of SCIMP by LYN. This interaction facilitates the phosphorylation of TLR4 by LYN which elicits a selective cytokine response in macrophages. Interacts with TRAF3IP3. Interacts with TREM1; this interaction enhances TLR4-mediated inflammatory response. Interacts with ZG16B/PAUF. Interacts with CD82; this interaction inhibits TLR4-mediated signaling pathway. Post-translationally, phosphorylated on tyrosine residues by LYN after binding lipopolysaccharide. Ubiquitinated by RNF128 via 'Lys-28'-linked polyubiquitin chains, leading to proteasomal degradation.

It localises to the cell membrane. The protein localises to the early endosome. The protein resides in the cell projection. It is found in the ruffle. In terms of biological role, transmembrane receptor that functions as a pattern recognition receptor recognizing pathogen- and damage-associated molecular patterns (PAMPs and DAMPs) to induce innate immune responses via downstream signaling pathways. At the plasma membrane, cooperates with LY96 to mediate the innate immune response to bacterial lipopolysaccharide (LPS). Also involved in LPS-independent inflammatory responses triggered by free fatty acids, such as palmitate, and Ni(2+). Mechanistically, acts via MYD88, TIRAP and TRAF6, leading to NF-kappa-B activation, cytokine secretion and the inflammatory response. Alternatively, CD14-mediated TLR4 internalization via endocytosis is associated with the initiation of a MYD88-independent signaling via the TICAM1-TBK1-IRF3 axis leading to type I interferon production. In addition to the secretion of proinflammatory cytokines, initiates the activation of NLRP3 inflammasome and formation of a positive feedback loop between autophagy and NF-kappa-B signaling cascade. In complex with TLR6, promotes inflammation in monocytes/macrophages by associating with TLR6 and the receptor CD86. Upon ligand binding, such as oxLDL or amyloid-beta 42, the TLR4:TLR6 complex is internalized and triggers inflammatory response, leading to NF-kappa-B-dependent production of CXCL1, CXCL2 and CCL9 cytokines, via MYD88 signaling pathway, and CCL5 cytokine, via TICAM1 signaling pathway. In myeloid dendritic cells, vesicular stomatitis virus glycoprotein G but not LPS promotes the activation of IRF7, leading to type I IFN production in a CD14-dependent manner. In Gorilla gorilla gorilla (Western lowland gorilla), this protein is Toll-like receptor 4 (TLR4).